Here is a 398-residue protein sequence, read N- to C-terminus: tRNA (guanine-N(7)-)-methyltransferase (398 aa).

S-adenosyl-L-methionine is bound by residues glutamate 124, glutamate 149, and aspartate 176. Aspartate 232 is a binding site for substrate.

It belongs to the class I-like SAM-binding methyltransferase superfamily. TrmB family.

The enzyme catalyses guanosine(46) in tRNA + S-adenosyl-L-methionine = N(7)-methylguanosine(46) in tRNA + S-adenosyl-L-homocysteine. It participates in tRNA modification; N(7)-methylguanine-tRNA biosynthesis. Its function is as follows. Catalyzes the formation of N(7)-methylguanine at position 46 (m7G46) in tRNA. The protein is tRNA (guanine-N(7)-)-methyltransferase of Helicobacter acinonychis (strain Sheeba).